A 248-amino-acid chain; its full sequence is 2,3-bisphosphoglycerate-dependent phosphoglycerate mutase (248 aa).

Residues 8–15 (RHGESAWN), 21–22 (TG), arginine 60, 87–90 (EKHY), lysine 98, 114–115 (RR), and 183–184 (GN) contribute to the substrate site. The Tele-phosphohistidine intermediate role is filled by histidine 9. The active-site Proton donor/acceptor is glutamate 87.

Belongs to the phosphoglycerate mutase family. BPG-dependent PGAM subfamily.

The enzyme catalyses (2R)-2-phosphoglycerate = (2R)-3-phosphoglycerate. Its pathway is carbohydrate degradation; glycolysis; pyruvate from D-glyceraldehyde 3-phosphate: step 3/5. Catalyzes the interconversion of 2-phosphoglycerate and 3-phosphoglycerate. This Bacteroides fragilis (strain ATCC 25285 / DSM 2151 / CCUG 4856 / JCM 11019 / LMG 10263 / NCTC 9343 / Onslow / VPI 2553 / EN-2) protein is 2,3-bisphosphoglycerate-dependent phosphoglycerate mutase.